Consider the following 95-residue polypeptide: Protein TusB (95 aa).

Belongs to the DsrH/TusB family. Heterohexamer, formed by a dimer of trimers. The hexameric TusBCD complex contains 2 copies each of TusB, TusC and TusD. The TusBCD complex interacts with TusE.

The protein localises to the cytoplasm. Part of a sulfur-relay system required for 2-thiolation of 5-methylaminomethyl-2-thiouridine (mnm(5)s(2)U) at tRNA wobble positions. In Sodalis glossinidius (strain morsitans), this protein is Protein TusB.